We begin with the raw amino-acid sequence, 493 residues long: Glutamate--tRNA ligase (493 aa).

The 'HIGH' region motif lies at 10 to 20 (PSPTGDPHVGT). Residues 251–255 (KLSKR) carry the 'KMSKS' region motif. K254 lines the ATP pocket.

The protein belongs to the class-I aminoacyl-tRNA synthetase family. Glutamate--tRNA ligase type 1 subfamily. As to quaternary structure, monomer.

It localises to the cytoplasm. It carries out the reaction tRNA(Glu) + L-glutamate + ATP = L-glutamyl-tRNA(Glu) + AMP + diphosphate. Functionally, catalyzes the attachment of glutamate to tRNA(Glu) in a two-step reaction: glutamate is first activated by ATP to form Glu-AMP and then transferred to the acceptor end of tRNA(Glu). This Pseudomonas putida (strain W619) protein is Glutamate--tRNA ligase.